Here is a 281-residue protein sequence, read N- to C-terminus: Probable thioesterase gloN (281 aa).

The segment at 207–233 (LDDGSNNSRDLNETSPTETSNDSETQA) is disordered. Polar residues predominate over residues 210–232 (GSNNSRDLNETSPTETSNDSETQ).

The protein belongs to the AMT4 thioesterase family.

Its pathway is mycotoxin biosynthesis. In terms of biological role, probable thioesterase; part of the gene cluster that mediates the biosynthesis of pneumocandins, lipohexapeptides of the echinocandin family that prevent fungal cell wall formation by non-competitive inhibition of beta-1,3-glucan synthase. The 10,12-dimethylmyristoyl side chain is synthesized by the reducing polyketide synthase gloL/GLPKS4. The thioesterase gloN/GLHYD exclusively interacts with gloL/GLPKS4 to maintain turnover of the polyketide side chain. The 10R,12S-dimethylmyristic acid is then transferred to the first thiolation domain of the nonribosomal peptide synthetase gloA/GLNRPS4 by the acyl-AMP ligase gloD/GLligase, followed by its acylation to L-ornithine to trigger elongation of the cyclic hexapeptide. L-ornithine, 4R-hydroxyl-L-proline (generated from L-proline by the dioxygenase gloF/GLOXY2), 3S-hydroxyl-L-homotyrosine (generated by gloG/GLHtyB, gloH/GLHtyA, gloI/GLHtyC, gloJ/GLHtyD and hydroxylated at C-3 by the dioxygenase gloM/GLOXY1), 3R-hydroxyl-L-glutamine (generated from L-glutamine probably by the dioxygenase gloE/GLOXY3) and 3S-hydroxyl-L-proline (generated from L-proline by the dioxygenase gloF/GLOXY2 to yield pneumocandin B0), or 3S-hydroxyl-4S-methyl-L-proline (generated from L-leucine by the dioxygenase gloC/GLOXY4 to yield pneumocandin A0) are sequentially added to the growing chain. The last C domain of gloA/GLNRPS4 is proposed to be responsible for cyclization by condensation to form the peptide bond between L-ornithine and 3S-hydroxyl-4S-methyl-L-proline (for pneumocandin A0) or 3S-hydroxyl-L-proline (for pneumocandin B0). Finally, the subsequent C-4 hydroxylation of 3S-hydroxyl-L-homotyrosine and L-ornithine dihydroxylation at C-4 and C-5 are performed by the cytochrome P450 monooxygenases gloP/GLP450-1 and gloO/GLP450-2, respectively. In Glarea lozoyensis (strain ATCC 20868 / MF5171), this protein is Probable thioesterase gloN.